A 151-amino-acid chain; its full sequence is Decarboxylase nsrE (151 aa).

The EthD domain maps to 31–126; sequence AGMTEEDYHN…VGDHENFADT (96 aa).

It belongs to the tpcK family.

It catalyses the reaction atrochrysone carboxylate + H(+) = atrochrysone + CO2. It functions in the pathway secondary metabolite biosynthesis. Its function is as follows. Decarboxylase; part of the gene cluster that mediates the biosynthesis of the tetrahydroxanthone dimer neosartorin, which exhibits antibacterial activity. The two different monomeric units appear to be synthesized by the same set of enzymes, among which the Baeyer-Villiger monooxygenase nsrF is the key enzyme for the divergence of the biosynthetic routes. The pathway begins with the synthesis of atrochrysone thioester by the polyketide synthase nsrB. The atrochrysone carboxyl ACP thioesterase nsrC then breaks the thioester bond and releases the atrochrysone carboxylic acid from AacuL. Atrochrysone carboxylic acid is decarboxylated by the decarboxylase nsrE, and oxidized by the anthrone oxygenase nsrD to yield emodin. Emodin is then reduced to emodin hydroquinone by the oxidoreductase nsrR. A-ring reduction by the short chain dehydrogenase nsrJ, dehydration by the scytalone dehydratase-like protein nsrI and probable spontaneous re-oxidation, results in overall deoxygenation to chrysophanol. The Baeyer-Villiger monooxygenase nsrF accepts chrysophanol as a substrate to insert one oxygen atom at two different positions to yield the precursors of both monomric units. NsrF is promiscuous/flexible in interacting with the 2 (non methylated and methylated) aromatic rings of chrysophanol, thus diverging the biosynthetic pathway at this point. After the hydrolysis of the lactones, methylesterification by the methyltransferase nsrG yields respectively moniliphenone and 2,2',6'-trihydroxy-4-methyl-6-methoxya-cyldiphenylmethanone. The next steps are the hydroxylation by the FAD-dependent monooxygenase nsrK, followed by isomerization by the monooxygenase nsrQ. The short chain dehydrogenase/reductase nsrO then catalyzes the C-5 ketoreduction to give the xanthone skeleton of blennolide C and 5-acetylblennolide A. The acetyltransferase nsrL has a strict substrate specificity and uses only blennolide A but not blennolide C to yield 5-acetylblennolide A as the single-acetylated product. In the final step of the biosynthesis, the heterodimerization of the 2 xanthones, blennolide C and 5-acetylblennolide A, is catalyzed by the cytochrome P450 monooxygenase nsrP. NsrP can utilize at least three different xanthones as its substrates to perform the dimerization reaction. The chain is Decarboxylase nsrE from Aspergillus novofumigatus (strain IBT 16806).